Consider the following 529-residue polypeptide: Plexin domain-containing protein 2 (529 aa).

Residues 1–30 form the signal peptide; it reads MARFPKADLAAAGVMLLCHFFTDQFQFADG. Topologically, residues 31–454 are extracellular; the sequence is KPGDQILDWQ…AEKKGGTLHA (424 aa). Positions 80 to 104 are disordered; that stretch reads ASVGQDSPEPRSFTDLLLDDGQDNN. N-linked (GlcNAc...) asparagine glycans are attached at residues Asn103 and Asn160. The PSI domain occupies 327–372; that stretch reads TCLQFNRCGPCVSSQIGFNCSWCSKLQRCSSGFDRHRQDWVDSGCP. The chain crosses the membrane as a helical span at residues 455 to 475; sequence GLIIGILILVLIVATAILVTV. Residues 476 to 529 are Cytoplasmic-facing; sequence YMYHHPTSAASIFFIERRPSRWPAMKFRRGSGHPAYAEVEPVGEKEGFIVSEQC. Position 506 is a phosphoserine (Ser506).

The protein belongs to the plexin family. As to quaternary structure, interacts with CTTN. In terms of tissue distribution, expressed in the endothelial cells of the stroma but not in the endothelial cells of normal colonic tissue.

The protein localises to the membrane. Functionally, may play a role in tumor angiogenesis. In Homo sapiens (Human), this protein is Plexin domain-containing protein 2 (PLXDC2).